Reading from the N-terminus, the 187-residue chain is Ribosome maturation factor RimM (187 aa).

Residues 111-187 enclose the PRC barrel domain; it reads KDEYYWVDLI…RILVDWQADF (77 aa).

This sequence belongs to the RimM family. In terms of assembly, binds ribosomal protein uS19.

The protein localises to the cytoplasm. In terms of biological role, an accessory protein needed during the final step in the assembly of 30S ribosomal subunit, possibly for assembly of the head region. Essential for efficient processing of 16S rRNA. May be needed both before and after RbfA during the maturation of 16S rRNA. It has affinity for free ribosomal 30S subunits but not for 70S ribosomes. In Albidiferax ferrireducens (strain ATCC BAA-621 / DSM 15236 / T118) (Rhodoferax ferrireducens), this protein is Ribosome maturation factor RimM.